A 90-amino-acid polypeptide reads, in one-letter code: MVLSRLNPIVKQCVLGNRPNLVSLGPVRTAVYSKSGGLLPEPHRTSFGIIRLILTVVPGLLIGAAISKNIANFLEENDLFVPSDDDDDDD.

The Mitochondrial matrix portion of the chain corresponds to 1–48 (MVLSRLNPIVKQCVLGNRPNLVSLGPVRTAVYSKSGGLLPEPHRTSFG). A helical transmembrane segment spans residues 49-76 (IIRLILTVVPGLLIGAAISKNIANFLEE). Residues 77 to 90 (NDLFVPSDDDDDDD) lie on the Mitochondrial intermembrane side of the membrane.

The protein belongs to the SMDT1/EMRE family. In terms of assembly, component of the uniplex complex, composed of MCU, EMRE, MICU1 and MICU2 in a 4:4:1:1 stoichiometry.

Its subcellular location is the mitochondrion inner membrane. Its function is as follows. Essential regulatory subunit of the mitochondrial calcium uniporter complex (uniplex), a complex that mediates calcium uptake into mitochondria. Required to bridge the calcium-sensing proteins MICU1 with the calcium-conducting subunit MCU. Acts by mediating activation of MCU and retention of MICU1 to the MCU pore, in order to ensure tight regulation of the uniplex complex and appropriate responses to intracellular calcium signaling. The sequence is that of Essential MCU regulator, mitochondrial (EMRE) from Tribolium castaneum (Red flour beetle).